The primary structure comprises 1070 residues: DNA-directed RNA polymerase subunit beta (1070 aa).

It belongs to the RNA polymerase beta chain family. As to quaternary structure, in plastids the minimal PEP RNA polymerase catalytic core is composed of four subunits: alpha, beta, beta', and beta''. When a (nuclear-encoded) sigma factor is associated with the core the holoenzyme is formed, which can initiate transcription.

Its subcellular location is the plastid. It localises to the chloroplast. It catalyses the reaction RNA(n) + a ribonucleoside 5'-triphosphate = RNA(n+1) + diphosphate. Functionally, DNA-dependent RNA polymerase catalyzes the transcription of DNA into RNA using the four ribonucleoside triphosphates as substrates. This Populus trichocarpa (Western balsam poplar) protein is DNA-directed RNA polymerase subunit beta.